An 88-amino-acid polypeptide reads, in one-letter code: Large ribosomal subunit protein bL31B (88 aa).

It belongs to the bacterial ribosomal protein bL31 family. Type B subfamily. In terms of assembly, part of the 50S ribosomal subunit.

This Leuconostoc mesenteroides subsp. mesenteroides (strain ATCC 8293 / DSM 20343 / BCRC 11652 / CCM 1803 / JCM 6124 / NCDO 523 / NBRC 100496 / NCIMB 8023 / NCTC 12954 / NRRL B-1118 / 37Y) protein is Large ribosomal subunit protein bL31B.